Consider the following 320-residue polypeptide: MPRTDDDSWEITESVGATALGVAAARAAETESENPLISDPFARVFLDAAGDGMWNWFAAPNLPAQIAEAEPDLKPRMQGMVDYMAARTAFFDNFFLAATHAGVRQVVILAAGLDSRAWRLPFEDGTTVYELDQPRVLEFKATTLAEHGARPTCHLVSVPVDLRHDWPAALRQAGFDAHAPSAWSAEGLLPFLPAAAQQLLFERVQTLAAPGSRIAVEAPGPDFIDEAARERQRQTMQRVRDLMADLEPDRDIPDVQDLWYFEEREDVGDWLGRHGWDVTVTPAPELMARYDRRPPHDIEDAIPQTRFVAAQRTERTRPDR.

S-adenosyl-L-methionine contacts are provided by residues Asp-132 and 161–162 (DL). Residues 294–320 (PPHDIEDAIPQTRFVAAQRTERTRPDR) form a disordered region.

This sequence belongs to the UPF0677 family.

In terms of biological role, exhibits S-adenosyl-L-methionine-dependent methyltransferase activity. This chain is Putative S-adenosyl-L-methionine-dependent methyltransferase MAP_4078, found in Mycolicibacterium paratuberculosis (strain ATCC BAA-968 / K-10) (Mycobacterium paratuberculosis).